Here is a 604-residue protein sequence, read N- to C-terminus: Putative O-acetyltransferase SAR0937 (604 aa).

The next 11 membrane-spanning stretches (helical) occupy residues 15-35 (YMPG…IYHL), 43-63 (GFLG…SLLL), 85-105 (LLPA…LLKS), 150-170 (AIEE…LLTI), 176-196 (IGFI…FIYS), 212-232 (LQTL…KLKN), 240-260 (YVID…FFII), 267-287 (IYDG…ASVV), 310-330 (YSLY…YVDG), 332-352 (IPVY…ELSY), and 377-397 (FIRM…LVGA). Residues serine 459, aspartate 581, and histidine 584 contribute to the active site.

It belongs to the acyltransferase 3 family.

The protein resides in the cell membrane. This chain is Putative O-acetyltransferase SAR0937, found in Staphylococcus aureus (strain MRSA252).